We begin with the raw amino-acid sequence, 998 residues long: Protein Smaug (998 aa).

Over residues 1–37 (MKYATGTDNAMTSGISGQTNSSNSASNEMQPTTSTPT) the composition is skewed to polar residues. Disordered regions lie at residues 1–45 (MKYA…EATS), 50–69 (TATY…QSQP), and 329–370 (LCPA…GSSS). Residues 329 to 338 (LCPASGSRSS) are compositionally biased toward low complexity. S564 and S575 each carry phosphoserine. The interval 583–763 (EFKPNYIKFH…KDLKFKLSKM (181 aa)) is interaction with cup. An SAM domain is found at 600 to 654 (GIGLWLKSLRLHKYIELFKNMTYEEMLLITEDFLQSVGVTKGASHKLALCIDKLK). Disordered regions lie at residues 773 to 892 (HVKP…MQQM) and 943 to 977 (NGSN…QQPK). 2 stretches are compositionally biased toward polar residues: residues 801-822 (KSGS…NFSL) and 854-864 (HQPQYKSSSYP). S971 bears the Phosphoserine mark.

The protein belongs to the SMAUG family. As to quaternary structure, interacts with oskar (osk). Binds to the 3'-UTR of nos. Interacts with cup, which in turn recruits eIF4-E, leading to an indirect interaction between smg and eIF4-E that prevents mRNA translation.

The protein resides in the cytoplasm. Its function is as follows. Translation regulator that binds to the 3'-UTR of specific mRNAs such as nanos (nos) and prevent their translation. Prevents translation of unlocalized nos in the bulk cytoplasm via the recruitment of cup. The sequence is that of Protein Smaug from Drosophila sechellia (Fruit fly).